A 236-amino-acid polypeptide reads, in one-letter code: Lipid A 4'-phosphatase (236 aa).

A run of 5 helical transmembrane segments spans residues Phe-26–Phe-46, Phe-58–Phe-78, Tyr-134–Gly-153, Ile-160–Arg-182, and Gly-200–Met-220.

Belongs to the lipid A LpxF 4'-phosphatase family.

It is found in the cell inner membrane. The protein operates within bacterial outer membrane biogenesis; LPS lipid A biosynthesis. Its function is as follows. Removes the 4'-phosphate group from lipid A species. Absence of phosphate groups in lipid A renders the bacteria resistant to host-derived cationic antimicrobial peptides (CAMP) and allows it to camouflage itself from the host innate immune response. Removal of the 4'-phosphate may be required to generate the substrate for deacylation of the pentaacyl lipid A to the tetraccylated lipid A species. This is Lipid A 4'-phosphatase from Porphyromonas gingivalis (strain ATCC 33277 / DSM 20709 / CIP 103683 / JCM 12257 / NCTC 11834 / 2561).